Reading from the N-terminus, the 418-residue chain is Probable mitochondrial adenine nucleotide transporter BTL2 (418 aa).

Solcar repeat units lie at residues 122–205, 215–300, and 329–414; these read MNTR…YRKQ, ATNF…LKSS, and LGPI…MKIV. 6 helical membrane passes run 127-147, 180-200, 221-241, 276-296, 335-355, and 383-403; these read HLWAGAVAAMVSKTFLAPLER, GNLLNVLRTAPFKAVNFCAYD, FVAGAAAGITATVLCLPLDTI, LVPSIASMALSGAVFYGVYDI, LMYGAIAGACTEVATYPFEVV, and IPALYAGLLPSLLQVLPSASI.

The protein belongs to the mitochondrial carrier (TC 2.A.29) family.

It is found in the mitochondrion inner membrane. Its function is as follows. Probable mitochondrial adenylate carrier that catalyzes the transport of ATP, ADP and AMP. The sequence is that of Probable mitochondrial adenine nucleotide transporter BTL2 from Arabidopsis thaliana (Mouse-ear cress).